Reading from the N-terminus, the 201-residue chain is Endoribonuclease YbeY (201 aa).

Residues H120, H124, and H130 each contribute to the Zn(2+) site. Residues 151–201 (DGADGADGADGARGAADGAADGGEGRRGDQGRRGDQGRGGGAGEPPAAPAR) form a disordered region. Over residues 173–186 (GEGRRGDQGRRGDQ) the composition is skewed to basic and acidic residues.

Belongs to the endoribonuclease YbeY family. The cofactor is Zn(2+).

The protein resides in the cytoplasm. Single strand-specific metallo-endoribonuclease involved in late-stage 70S ribosome quality control and in maturation of the 3' terminus of the 16S rRNA. This Frankia casuarinae (strain DSM 45818 / CECT 9043 / HFP020203 / CcI3) protein is Endoribonuclease YbeY.